A 132-amino-acid polypeptide reads, in one-letter code: Pro-MCH 1 (132 aa).

The N-terminal stretch at 1–24 is a signal peptide; it reads MRHSVLSISFAVALFLECYTPSTA. Cys120 and Cys129 are joined by a disulfide.

It belongs to the melanin-concentrating hormone family. As to expression, pituitary gland. Produced in neurons of lateral basal hypothalamus which project both to the brain and to the neural lobe of the pituitary gland from where MCH is released.

Plays a role in skin pigmentation by antagonizing the action of melanotropin alpha. Induces melanin concentration within the melanophores. May participate in the control of the hypothalamo-pituitary adrenal gland axis by inhibiting the release of ACTH. This Oncorhynchus mykiss (Rainbow trout) protein is Pro-MCH 1 (mch1).